A 457-amino-acid polypeptide reads, in one-letter code: MDAGMNNTSSHYKTQARCPLQEHFLPRKPSKENLDRFIPNRSAMNFDYAHFALTEGRKGKDQTAAVSSPSKEAYRKQLAETMNLNHTRILAFRNKPQAPVELLPSNHSASLHQQPKSVKPRRYIPQTSERTLDAPDIVDDFYLNLLDWGSANVLAIALDHTVYLWDASTGSTSELVTIDEEKGPVTSINWAPDGRHVAVGLNNSEVQLWDSASNRQLRTLKGGHQSRVGSLAWNNHILTTGGMDGLIINNDVRIRSPIVETYRGHTQEVCGLKWSGSGQQLASGGNDNVVHIWDRSVASSNSTTQWLHRLEEHTSAVKALAWCPFQANLLATGGGGGDRTIKFWNTHTGACLNSVDTGSQVCSLLWSKNERELLSSHGFTQNQLTLWKYPSMVKMAELTGHTSRVLYMAQSPDGCTVASAAGDETLRFWNVFGVPETAKKAAPKAVSEPFSHVNRIR.

7 WD repeats span residues 138 to 175, 180 to 219, 223 to 260, 264 to 303, 312 to 354, 356 to 397, and 400 to 439; these read VDDF…TSEL, EEKG…QLRT, GHQS…PIVE, GHTQ…SNST, EHTS…CLNS, DTGS…KMAE, and GHTS…ETAK.

The protein belongs to the WD repeat CDC20/Fizzy family. The APC/C is composed of at least 11 subunits that stay tightly associated throughout the cell cycle. Interacts with APC10, FZR1, FZR2, FZR3. Binds to GIG1 and PYM. Part of the mitotic checkpoint complex (MCC); interacts with MAD2, BUB3.1, BUBR1 and BUB1. Binds to cyclins CYCA1-2, CYCB2-1 and CYCB2-2. Interacts with PANS1. As to expression, expressed in meristems and organ primordia. Present in flowers, leaves, stems, roots, pollen grains and developing seeds.

It localises to the nucleus. The protein operates within protein modification; protein ubiquitination. Its function is as follows. Component of the anaphase promoting complex/cyclosome (APC/C), a cell cycle-regulated E3 ubiquitin-protein ligase complex that controls progression through mitosis and the G1 phase of the cell cycle. In Arabidopsis thaliana (Mouse-ear cress), this protein is Cell division cycle 20.1, cofactor of APC complex (CDC20-1).